We begin with the raw amino-acid sequence, 1035 residues long: Teashirt homolog 2 (1035 aa).

The tract at residues 1-92 is disordered; that stretch reads MPRRKQQAPK…ESLLSDASDQ (92 aa). Positions 13 to 42 form a coiled coil; that stretch reads AGYAQEEQLKEEEEIKEEEEEEEDSGSVAQ. Positions 21–37 are enriched in acidic residues; that stretch reads LKEEEEIKEEEEEEEDS. 2 stretches are compositionally biased toward polar residues: residues 39-49 and 66-92; these read SVAQLQGSNDP and SYQNSPGSHLSNQDAENESLLSDASDQ. Lysine 189 is covalently cross-linked (Glycyl lysine isopeptide (Lys-Gly) (interchain with G-Cter in SUMO2)). 2 C2H2-type zinc fingers span residues 216 to 240 and 276 to 300; these read FRCRQCSAAYDTLVELTVHMNETGH and LKCMFCGDSFDSLQDLSVHMIKTKH. The segment at 240-266 is disordered; that stretch reads HYQDDNRKKDKLRPTSYSKPRKRAFQD. Glycyl lysine isopeptide (Lys-Gly) (interchain with G-Cter in SUMO2) cross-links involve residues lysine 307 and lysine 316. Residues 381–405 form a C2H2-type 3; atypical zinc finger; the sequence is LKCMECGSSHDTLQQLTTHMMVTGH. Residue lysine 418 forms a Glycyl lysine isopeptide (Lys-Gly) (interchain with G-Cter in SUMO2) linkage. The span at 432–450 shows a compositional bias: low complexity; that stretch reads SLSDAPSSDSLAPKPSSNS. Residues 432–496 form a disordered region; that stretch reads SLSDAPSSDS…DPLQKPLDPA (65 aa). Positions 460-483 are enriched in basic and acidic residues; it reads ELKRESKKEKPEELRTDEKVLKSE. Glycyl lysine isopeptide (Lys-Gly) (interchain with G-Cter in SUMO2) cross-links involve residues lysine 462, lysine 481, lysine 498, and lysine 602. Disordered regions lie at residues 600–674 and 764–791; these read QVKK…VEPV and QPIDLTKSKSKKAESSQAQSCTSPPQKH. Over residues 601–669 the composition is skewed to basic and acidic residues; that stretch reads VKKEPEDKEE…KDGGEKEKAQ (69 aa). Residues lysine 801 and lysine 821 each participate in a glycyl lysine isopeptide (Lys-Gly) (interchain with G-Cter in SUMO2) cross-link. A DNA-binding region (homeobox) is located at residues 842–912; that stretch reads RKGRQSNWNP…NVKYQLRKTG (71 aa). The segment at 927-949 adopts a C2H2-type 4 zinc-finger fold; it reads FYCSDCASQFRTPSTYISHLESH. Over residues 968 to 977 the composition is skewed to low complexity; sequence VEQEISRVSS. Disordered stretches follow at residues 968-987 and 1015-1035; these read VEQEISRVSSAQRSPETIAG and SKTHSKSPEHHAQFVTDVDEE. Serine 981 is subject to Phosphoserine. A C2H2-type 5 zinc finger spans residues 995 to 1018; the sequence is FKCKLCCRTFVSKHAVKLHLSKTH.

This sequence belongs to the teashirt C2H2-type zinc-finger protein family. In terms of assembly, interacts (via homeobox domain) with APBB1 (via PID domain 1). Post-translationally, sumoylated.

It is found in the nucleus. In terms of biological role, probable transcriptional regulator involved in developmental processes. May act as a transcriptional repressor (Potential). The polypeptide is Teashirt homolog 2 (TSHZ2) (Sus scrofa (Pig)).